A 630-amino-acid chain; its full sequence is Putative polypeptide N-acetylgalactosaminyltransferase 10 (630 aa).

Over 1 to 6 (MNVDLR) the chain is Cytoplasmic. A helical; Signal-anchor for type II membrane protein transmembrane segment spans residues 7-26 (LIVRLLLAILLTSLVTTILM). Residues 27-630 (GKQIHRRLVK…APYDPQREPH (604 aa)) are Lumenal-facing. 4 N-linked (GlcNAc...) asparagine glycosylation sites follow: N72, N84, N146, and N168. Disulfide bonds link C157-C386, C377-C456, and C496-C513. Positions 166–277 (LPNVTVIIAF…TNWLPPLLEP (112 aa)) are catalytic subdomain A. The substrate site is built by D207 and R238. D261 is a Mn(2+) binding site. S262 is a binding site for substrate. Position 263 (H263) interacts with Mn(2+). The catalytic subdomain B stretch occupies residues 333–394 (PYRTPVLSGA…PCARVGHIGK (62 aa)). W363 lines the substrate pocket. Residue H391 participates in Mn(2+) binding. The Ricin B-type lectin domain occupies 483–618 (FSGVIESVAF…NQLEQQWKVG (136 aa)). An N-linked (GlcNAc...) asparagine glycan is attached at N525. 2 disulfides stabilise this stretch: C543/C559 and C586/C606.

It belongs to the glycosyltransferase 2 family. GalNAc-T subfamily. It depends on Mn(2+) as a cofactor. During embryonic stages 9-11, weakly expressed in the mesoderm. During embryonic stages 12-13, very weak expression is observed in the somatic mesoderm region. No expression detected from stage 14-15. During embryonic stages 16-17, expressed in the epidermis and the antennomaxillary complex. In third instar larvae, expressed ubiquitously in wing, eye-antennal, leg and haltere imaginal disks.

The protein resides in the golgi apparatus membrane. It carries out the reaction L-seryl-[protein] + UDP-N-acetyl-alpha-D-galactosamine = a 3-O-[N-acetyl-alpha-D-galactosaminyl]-L-seryl-[protein] + UDP + H(+). The catalysed reaction is L-threonyl-[protein] + UDP-N-acetyl-alpha-D-galactosamine = a 3-O-[N-acetyl-alpha-D-galactosaminyl]-L-threonyl-[protein] + UDP + H(+). The protein operates within protein modification; protein glycosylation. May catalyze the initial reaction in O-linked oligosaccharide biosynthesis, the transfer of an N-acetyl-D-galactosamine residue to a serine or threonine residue on the protein receptor. This Drosophila melanogaster (Fruit fly) protein is Putative polypeptide N-acetylgalactosaminyltransferase 10 (pgant10).